Reading from the N-terminus, the 492-residue chain is Heat shock factor protein 4 (492 aa).

A DNA-binding region spans residues 17 to 121 (VPAFLGKLWA…QLLERVRRKV (105 aa)). The hydrophobic repeat HR-A/B stretch occupies residues 129–203 (GRWRPEDLGR…GPLQAGPSNA (75 aa)). Positions 245–322 (LPETNLGLSP…ECDFCVTAPP (78 aa)) are interactions with DUSP26, MAPK1 and MAPK2. Residues 246-285 (PETNLGLSPHRARGPIISDIPEDSPSPEGTRLSPSSDGRR) are disordered. Lys293 participates in a covalent cross-link: Glycyl lysine isopeptide (Lys-Gly) (interchain with G-Cter in SUMO). At Ser298 the chain carries Phosphoserine. Positions 337 to 400 (GSFSPEGPRN…PAGPLDVLGP (64 aa)) are disordered. The interval 364–389 (LGLESGDRSPESLLPPMLLQPPQESV) is hydrophobic repeat HR-C. Over residues 374-388 (ESLLPPMLLQPPQES) the composition is skewed to low complexity.

Belongs to the HSF family. In terms of assembly, homotrimer. Exhibits constitutive DNA binding and forms trimers even in the absence of stress. Interacts with ALKBH4, DUSP26, MAPK1, MAPK2, MAPK8 and MAP kinase p38. Post-translationally, phosphorylated mainly on serine residues. Phosphorylation on Ser-298 promotes sumoylation on Lys-293. Isoform HSF4B is constitutively sumoylated. Sumoylation represses the transcriptional activity and is promoted by phosphorylation on Ser-298. HSFA is not sumoylated. In terms of tissue distribution, expressed in heart, skeletal muscle, eye and brain, and at much lower levels in some other tissues.

It is found in the nucleus. Functionally, heat-shock transcription factor that specifically binds heat shock promoter elements (HSE). Required for denucleation and organelle rupture and degradation that occur during eye lens terminal differentiation, when fiber cells that compose the lens degrade all membrane-bound organelles in order to provide lens with transparency to allow the passage of light. In this process, may regulate denucleation of lens fiber cells in part by activating DNASE2B transcription. May be involved in DNA repair through the transcriptional regulation of RAD51. May up-regulate p53/TP53 protein in eye lens fiber cells, possibly through protein stabilization. In the eye lens, controls the expression of alpha-crystallin B chain/CRYAB and consequently may be involved in the regulation of lysosomal acidification. Its function is as follows. Transcriptional repressor. In terms of biological role, transcriptional activator. This Homo sapiens (Human) protein is Heat shock factor protein 4 (HSF4).